The sequence spans 212 residues: Golgi SNAP receptor complex member 2 (212 aa).

Met1 bears the N-acetylmethionine mark. Residues 1–190 (MDPLFQQTHK…LIEKRAFQDK (190 aa)) lie on the Cytoplasmic side of the membrane. Positions 61 to 107 (NKRQNARLRVDQLKYDVQHLQTALRNFQHRRHAREQQERQREELLSR) form a coiled coil. The IxM motif; signal for cargo packaging into COPII-coated vesicles motif lies at 118-120 (IPM). Residues 191-211 (YFMIGGMLLTCVVMFLVVQYL) form a helical; Anchor for type IV membrane protein membrane-spanning segment. Thr212 is a topological domain (vesicular).

The protein belongs to the GOSR2 family. As to quaternary structure, part of a unique SNARE complex composed of the Golgi SNAREs GOSR1, STX5 and YKT6. Interacts (via IxM motif) with SEC24C and SEC24D; mediates GOSR2 packaging into COPII-coated vesicles. Interacts with BET1.

The protein localises to the golgi apparatus. Its subcellular location is the cis-Golgi network membrane. The protein resides in the golgi apparatus membrane. It is found in the endoplasmic reticulum membrane. Functionally, involved in transport of proteins from the cis/medial-Golgi to the trans-Golgi network. The protein is Golgi SNAP receptor complex member 2 (GOSR2) of Homo sapiens (Human).